Reading from the N-terminus, the 239-residue chain is Exosome complex exonuclease RRP46 homolog (239 aa).

Met-1 carries the N-acetylmethionine modification.

This sequence belongs to the RNase PH family. As to quaternary structure, probable component of the RNA exosome complex.

The protein localises to the nucleus. The protein resides in the nucleolus. Functionally, probable component of the exosome 3'-&gt;5' exoribonuclease complex, a complex that degrades inherently unstable mRNAs containing AU-rich elements (AREs) within their 3'-untranslated regions. The polypeptide is Exosome complex exonuclease RRP46 homolog (Arabidopsis thaliana (Mouse-ear cress)).